Consider the following 705-residue polypeptide: Translation factor GUF1 homolog, mitochondrial (705 aa).

The N-terminal 20 residues, 1–20 (MVCHRYLLGLGASTLCLRRL), are a transit peptide targeting the mitochondrion. The disordered stretch occupies residues 72–92 (PVEDNGTTNLTGTGEATSETG). A compositionally biased stretch (polar residues) spans 76 to 90 (NGTTNLTGTGEATSE). The region spanning 105–288 (NRMRNFCIIA…AVVERIPPPK (184 aa)) is the tr-type G domain. Residues 114-121 (AHVDHGKS), 181-185 (DTPGH), and 235-238 (NKID) contribute to the GTP site.

The protein belongs to the TRAFAC class translation factor GTPase superfamily. Classic translation factor GTPase family. LepA subfamily.

It is found in the mitochondrion inner membrane. It catalyses the reaction GTP + H2O = GDP + phosphate + H(+). Promotes mitochondrial protein synthesis. May act as a fidelity factor of the translation reaction, by catalyzing a one-codon backward translocation of tRNAs on improperly translocated ribosomes. Binds to mitochondrial ribosomes in a GTP-dependent manner. In Babesia bovis, this protein is Translation factor GUF1 homolog, mitochondrial.